Reading from the N-terminus, the 338-residue chain is Transferrin receptor subunit ESAG7 (338 aa).

An N-terminal signal peptide occupies residues 1–17; that stretch reads MRFWFVLLALLGKEIYA. N-linked (GlcNAc...) asparagine glycans are attached at residues N26 and N110. Disulfide bonds link C34-C161, C84-C311, C144-C215, and C230-C247. N-linked (GlcNAc...) asparagine glycosylation is present at N234.

In terms of assembly, heterodimer composed of ESAG6 and ESAG7. Post-translationally, N-glycosylated. Glycosylation is dispensable for heterodimer formation and host transferrin binding.

Its subcellular location is the cell membrane. It is found in the flagellar pocket. Its function is as follows. Transferrin receptor subunit involved in receptor-mediated acquisition of iron from the environment by binding host TF/transferrin. The chain is Transferrin receptor subunit ESAG7 from Trypanosoma brucei brucei.